A 260-amino-acid polypeptide reads, in one-letter code: Phosphate import ATP-binding protein PstB (260 aa).

In terms of domain architecture, ABC transporter spans 14–255 (IETENLSLFY…PKNTKTEEYI (242 aa)). 46-53 (GPSGCGKS) serves as a coordination point for ATP.

This sequence belongs to the ABC transporter superfamily. Phosphate importer (TC 3.A.1.7) family. The complex is composed of two ATP-binding proteins (PstB), two transmembrane proteins (PstC and PstA) and a solute-binding protein (PstS).

The protein resides in the cell inner membrane. The enzyme catalyses phosphate(out) + ATP + H2O = ADP + 2 phosphate(in) + H(+). Part of the ABC transporter complex PstSACB involved in phosphate import. Responsible for energy coupling to the transport system. The polypeptide is Phosphate import ATP-binding protein PstB (Borrelia garinii subsp. bavariensis (strain ATCC BAA-2496 / DSM 23469 / PBi) (Borreliella bavariensis)).